A 298-amino-acid chain; its full sequence is Acetylglutamate kinase (298 aa).

Substrate is bound by residues Gly-69–Gly-70, Arg-91, and Asn-191.

This sequence belongs to the acetylglutamate kinase family. ArgB subfamily.

The protein localises to the cytoplasm. The enzyme catalyses N-acetyl-L-glutamate + ATP = N-acetyl-L-glutamyl 5-phosphate + ADP. Its pathway is amino-acid biosynthesis; L-arginine biosynthesis; N(2)-acetyl-L-ornithine from L-glutamate: step 2/4. In terms of biological role, catalyzes the ATP-dependent phosphorylation of N-acetyl-L-glutamate. The polypeptide is Acetylglutamate kinase (Neisseria meningitidis serogroup C / serotype 2a (strain ATCC 700532 / DSM 15464 / FAM18)).